Consider the following 122-residue polypeptide: Double-headed protease inhibitor, submandibular gland (122 aa).

Kazal-like domains follow at residues 10–70 (GGRK…KCDI) and 71–121 (ECPQ…QCQS). Cystine bridges form between cysteine 16-cysteine 50, cysteine 28-cysteine 47, cysteine 36-cysteine 68, cysteine 72-cysteine 101, cysteine 79-cysteine 98, and cysteine 87-cysteine 119.

The protein localises to the secreted. In terms of biological role, this inhibitor is composed of two homologous actively inhibiting halves: one which inhibits trypsin, the other which inhibits elastase. The chain is Double-headed protease inhibitor, submandibular gland from Mustela lutreola (European mink).